A 343-amino-acid polypeptide reads, in one-letter code: KRR1 small subunit processome component homolog (343 aa).

Residues 125–193 (DIIKIGNLVH…VRDIVVETMN (69 aa)) form the KH domain. Basic residues predominate over residues 232 to 245 (NISKRKQPKVKKAK). A disordered region spans residues 232 to 343 (NISKRKQPKV…KLLKANKKKV (112 aa)). Residues 270-302 (FLNKEQKQAKRQQERSAKQADAAKRQDERRNKD) adopt a coiled-coil conformation. Basic and acidic residues predominate over residues 271–302 (LNKEQKQAKRQQERSAKQADAAKRQDERRNKD). The span at 331–343 (LKAKLLKANKKKV) shows a compositional bias: basic residues.

It belongs to the KRR1 family. As to quaternary structure, monomer. Component of the ribosomal small subunit (SSU) processome.

It localises to the nucleus. The protein localises to the nucleolus. Functionally, required for 40S ribosome biogenesis. Involved in nucleolar processing of pre-18S ribosomal RNA and ribosome assembly. Binds to RNA. Required for female germline development, cell viability during eye development and for survival of dividing cells and epithelial cells during early wing disk development. This Drosophila ananassae (Fruit fly) protein is KRR1 small subunit processome component homolog.